We begin with the raw amino-acid sequence, 214 residues long: Large ribosomal subunit protein uL3 (214 aa).

Residues 136-156 (THGNSLSHRAPGSIGQNQTPG) are disordered. Residue glutamine 153 is modified to N5-methylglutamine.

It belongs to the universal ribosomal protein uL3 family. Part of the 50S ribosomal subunit. Forms a cluster with proteins L14 and L19. In terms of processing, methylated by PrmB.

One of the primary rRNA binding proteins, it binds directly near the 3'-end of the 23S rRNA, where it nucleates assembly of the 50S subunit. In Thioalkalivibrio sulfidiphilus (strain HL-EbGR7), this protein is Large ribosomal subunit protein uL3.